Here is a 349-residue protein sequence, read N- to C-terminus: Core protein VP7 (349 aa).

N-linked (GlcNAc...) asparagine; by host glycosylation occurs at Asn-45.

This sequence belongs to the orbivirus VP7 family. In terms of assembly, homotrimer.

The protein localises to the virion. Functionally, major structural core protein; binds to structural protein VP3. Constitutes the surface of the AHSV core. The protein is Core protein VP7 (Segment-7) of Camelus dromedarius (Dromedary).